A 64-amino-acid polypeptide reads, in one-letter code: DNA gyrase inhibitor YacG (64 aa).

Residues C7, C10, C26, and C30 each coordinate Zn(2+). Positions R44 to Q64 are disordered.

This sequence belongs to the DNA gyrase inhibitor YacG family. Interacts with GyrB. Zn(2+) is required as a cofactor.

Its function is as follows. Inhibits all the catalytic activities of DNA gyrase by preventing its interaction with DNA. Acts by binding directly to the C-terminal domain of GyrB, which probably disrupts DNA binding by the gyrase. The chain is DNA gyrase inhibitor YacG from Aeromonas hydrophila subsp. hydrophila (strain ATCC 7966 / DSM 30187 / BCRC 13018 / CCUG 14551 / JCM 1027 / KCTC 2358 / NCIMB 9240 / NCTC 8049).